The following is a 403-amino-acid chain: Large ribosomal subunit protein uL3 (403 aa).

The segment at 1–37 (MSHRKFSAPRHGSLGFLPRKRSSRHRGKVKSFPKDDP) is disordered. The residue at position 13 (serine 13) is a Phosphoserine. Basic residues predominate over residues 18 to 31 (PRKRSSRHRGKVKS). Residue lysine 39 forms a Glycyl lysine isopeptide (Lys-Gly) (interchain with G-Cter in SUMO2) linkage. An N6-acetyllysine modification is found at lysine 136. Residues lysine 224 and lysine 226 each participate in a glycyl lysine isopeptide (Lys-Gly) (interchain with G-Cter in SUMO2) cross-link. At histidine 245 the chain carries Tele-methylhistidine. N6-acetyllysine; alternate is present on residues lysine 286 and lysine 294. Residue lysine 286 forms a Glycyl lysine isopeptide (Lys-Gly) (interchain with G-Cter in SUMO2); alternate linkage. Lysine 294 participates in a covalent cross-link: Glycyl lysine isopeptide (Lys-Gly) (interchain with G-Cter in SUMO1); alternate. At serine 304 the chain carries Phosphoserine. Lysine 366 carries the N6-acetyllysine; alternate modification. Lysine 366 participates in a covalent cross-link: Glycyl lysine isopeptide (Lys-Gly) (interchain with G-Cter in SUMO2); alternate. Lysine 373 carries the N6-acetyllysine modification. Residues lysine 386, lysine 393, and lysine 399 each participate in a glycyl lysine isopeptide (Lys-Gly) (interchain with G-Cter in SUMO2) cross-link.

This sequence belongs to the universal ribosomal protein uL3 family. Component of the large ribosomal subunit. Interacts with DHX33. Constitutively monomethylated at His-245 by METTL18. Methylation at His-245 regulates translation elongation by slowing ribosome traversal on tyrosine codons: slower elongation provides enough time for proper folding of synthesized proteins and prevents cellular aggregation of tyrosine-rich proteins. It is not required for incorporation of RPL3 into ribosomes.

Its subcellular location is the nucleus. The protein localises to the nucleolus. The protein resides in the cytoplasm. Component of the large ribosomal subunit. The ribosome is a large ribonucleoprotein complex responsible for the synthesis of proteins in the cell. This Rattus norvegicus (Rat) protein is Large ribosomal subunit protein uL3 (Rpl3).